The following is a 178-amino-acid chain: Adenine phosphoribosyltransferase (178 aa).

Belongs to the purine/pyrimidine phosphoribosyltransferase family. In terms of assembly, homodimer.

It is found in the cytoplasm. The enzyme catalyses AMP + diphosphate = 5-phospho-alpha-D-ribose 1-diphosphate + adenine. It participates in purine metabolism; AMP biosynthesis via salvage pathway; AMP from adenine: step 1/1. In terms of biological role, catalyzes a salvage reaction resulting in the formation of AMP, that is energically less costly than de novo synthesis. The protein is Adenine phosphoribosyltransferase of Pseudoalteromonas atlantica (strain T6c / ATCC BAA-1087).